A 258-amino-acid polypeptide reads, in one-letter code: Global transcriptional regulator CodY (258 aa).

The GAF domain stretch occupies residues 1–156; that stretch reads MSSLLDKTRM…SATIIGLEIL (156 aa). Residues 204 to 223 constitute a DNA-binding region (H-T-H motif); that stretch reads ASKIADKVGITRSVIVNALR.

This sequence belongs to the CodY family.

The protein resides in the cytoplasm. DNA-binding global transcriptional regulator which is involved in the adaptive response to starvation and acts by directly or indirectly controlling the expression of numerous genes in response to nutrient availability. During rapid exponential growth, CodY is highly active and represses genes whose products allow adaptation to nutrient depletion. The sequence is that of Global transcriptional regulator CodY from Clostridium botulinum (strain Okra / Type B1).